The sequence spans 83 residues: MPKRVLTGTVVSDKTDKTVVVLVERKVKHPLYGKIIRLSKKYHAHDEQNAYHEGETVRIEECAPISKLKSWRVLEKADKASAA.

The protein belongs to the universal ribosomal protein uS17 family. Part of the 30S ribosomal subunit.

Functionally, one of the primary rRNA binding proteins, it binds specifically to the 5'-end of 16S ribosomal RNA. In Zymomonas mobilis subsp. mobilis (strain ATCC 31821 / ZM4 / CP4), this protein is Small ribosomal subunit protein uS17.